The sequence spans 309 residues: Tumor necrosis factor ligand superfamily member 9 (309 aa).

The span at 1 to 16 (MDQHTLDVEDTADARH) shows a compositional bias: basic and acidic residues. A disordered region spans residues 1–20 (MDQHTLDVEDTADARHPAGT). Residues 1–82 (MDQHTLDVED…ALNFCSRHPK (82 aa)) are Cytoplasmic-facing. Residues 83–103 (LYGLVALVLLLLIAACVPIFT) traverse the membrane as a helical; Signal-anchor for type II membrane protein segment. Over 104–309 (RTEPRPALTI…FLVKPDNPWE (206 aa)) the chain is Extracellular. N-linked (GlcNAc...) asparagine glycosylation is found at Asn139, Asn161, and Asn293. The region spanning 147 to 302 (VFAKLLAKNQ…NTTSFGLFLV (156 aa)) is the THD domain.

It belongs to the tumor necrosis factor family. As to quaternary structure, homotrimer.

The protein resides in the membrane. Cytokine that binds to TNFRSF9. Induces the proliferation of activated peripheral blood T-cells. May have a role in activation-induced cell death (AICD). May play a role in cognate interactions between T-cells and B-cells/macrophages. The polypeptide is Tumor necrosis factor ligand superfamily member 9 (Tnfsf9) (Mus musculus (Mouse)).